We begin with the raw amino-acid sequence, 384 residues long: Shufflon-specific DNA recombinase (384 aa).

Residues 9 to 96 (MSLSRALDKY…LLSSLFNIAR (88 aa)) enclose the Core-binding (CB) domain. In terms of domain architecture, Tyr recombinase spans 118 to 284 (GRDRRLTSSE…RAWQLVSKLD (167 aa)). Residues R155, K180, H235, R238, and H262 contribute to the active site. Y271 functions as the O-(3'-phospho-DNA)-tyrosine intermediate in the catalytic mechanism.

It belongs to the 'phage' integrase family.

In terms of biological role, shufflon-specific DNA recombinase. The chain is Shufflon-specific DNA recombinase (rci) from Escherichia coli.